We begin with the raw amino-acid sequence, 276 residues long: Dermonecrotic toxin LafSicTox-betaIE2 (276 aa).

The active site involves His5. Residues Glu25 and Asp27 each coordinate Mg(2+). His41 serves as the catalytic Nucleophile. 2 disulfide bridges follow: Cys45/Cys51 and Cys47/Cys189. Asp85 is a Mg(2+) binding site.

Belongs to the arthropod phospholipase D family. Class II subfamily. Mg(2+) serves as cofactor. In terms of tissue distribution, expressed by the venom gland.

The protein localises to the secreted. It carries out the reaction an N-(acyl)-sphingosylphosphocholine = an N-(acyl)-sphingosyl-1,3-cyclic phosphate + choline. The catalysed reaction is an N-(acyl)-sphingosylphosphoethanolamine = an N-(acyl)-sphingosyl-1,3-cyclic phosphate + ethanolamine. The enzyme catalyses a 1-acyl-sn-glycero-3-phosphocholine = a 1-acyl-sn-glycero-2,3-cyclic phosphate + choline. It catalyses the reaction a 1-acyl-sn-glycero-3-phosphoethanolamine = a 1-acyl-sn-glycero-2,3-cyclic phosphate + ethanolamine. Dermonecrotic toxins cleave the phosphodiester linkage between the phosphate and headgroup of certain phospholipids (sphingolipid and lysolipid substrates), forming an alcohol (often choline) and a cyclic phosphate. This toxin acts on sphingomyelin (SM). It may also act on ceramide phosphoethanolamine (CPE), lysophosphatidylcholine (LPC) and lysophosphatidylethanolamine (LPE), but not on lysophosphatidylserine (LPS), and lysophosphatidylglycerol (LPG). It acts by transphosphatidylation, releasing exclusively cyclic phosphate products as second products. Induces dermonecrosis, hemolysis, increased vascular permeability, edema, inflammatory response, and platelet aggregation. The chain is Dermonecrotic toxin LafSicTox-betaIE2 from Loxosceles aff. spinulosa (strain GJB-2008) (Recluse spider).